A 102-amino-acid chain; its full sequence is Monothiol glutaredoxin-S8 (102 aa).

In terms of domain architecture, Glutaredoxin spans 1–101; that stretch reads MEKIQKMISE…PMLKRFGALW (101 aa). Cys-21 serves as a coordination point for [2Fe-2S] cluster. A Responsive for interaction with TGA factors motif is present at residues 99–102; the sequence is ALWL.

It belongs to the glutaredoxin family. CC-type subfamily.

It localises to the cytoplasm. It is found in the nucleus. Its function is as follows. May only reduce GSH-thiol disulfides, but not protein disulfides. This is Monothiol glutaredoxin-S8 (GRXS8) from Arabidopsis thaliana (Mouse-ear cress).